Consider the following 218-residue polypeptide: GTP cyclohydrolase 1 (218 aa).

Zn(2+) contacts are provided by cysteine 109, histidine 112, and cysteine 180.

The protein belongs to the GTP cyclohydrolase I family. As to quaternary structure, toroid-shaped homodecamer, composed of two pentamers of five dimers.

It catalyses the reaction GTP + H2O = 7,8-dihydroneopterin 3'-triphosphate + formate + H(+). The protein operates within cofactor biosynthesis; 7,8-dihydroneopterin triphosphate biosynthesis; 7,8-dihydroneopterin triphosphate from GTP: step 1/1. This chain is GTP cyclohydrolase 1 (folE), found in Haemophilus influenzae (strain ATCC 51907 / DSM 11121 / KW20 / Rd).